The sequence spans 1280 residues: Pullulanase A (1280 aa).

An N-terminal signal peptide occupies residues 1-44 (MRKTPSHTEKKMVYSIRSLKNGTGSVLIGASLVLLAMATPTISS). Residues 42-132 (ISSDESTPTT…VTTETKAEEP (91 aa)) form a disordered region. Low complexity predominate over residues 48-61 (TPTTNEPNNRNTTT). Residues 79–90 (DISSPGNANASL) show a composition bias toward polar residues. Low complexity predominate over residues 115 to 126 (EPTTSTSPVTTE). Residues 156-158 (WTW), Trp168, Asp214, 263-265 (WYW), Trp276, Lys318, and Asn323 each bind substrate. Residues Ser661 and Tyr663 each coordinate Ca(2+). Residues 667–668 (YD) and Phe743 contribute to the substrate site. Asp778 (nucleophile) is an active-site residue. Catalysis depends on Glu807, which acts as the Proton donor. Trp809 is a binding site for substrate. Ca(2+) contacts are provided by Met828, Thr831, and Asp832. Substrate-binding residues include Asp839, Arg842, and Tyr849. Ca(2+) is bound by residues Asp882 and Asp886. Substrate is bound by residues Asn896, Lys969, and 989–991 (DSY). Ca(2+) is bound at residue Asp992. A disordered region spans residues 1140-1248 (VSQNGTSHES…TPDKQAELPN (109 aa)). The segment covering 1149-1196 (STAEEKPDSTPSKPEHQNEASHPAHQDPAPEARPDSTKPDAKVADAEN) has biased composition (basic and acidic residues). The segment covering 1205-1218 (SQAEQPAQEAQASS) has biased composition (low complexity). The short motif at 1246 to 1250 (LPNTG) is the LPXTG sorting signal element. The residue at position 1249 (Thr1249) is a Pentaglycyl murein peptidoglycan amidated threonine. Residues 1250-1280 (GIKNENKLLFAGISLLALLGLGFLLKNKKEN) constitute a propeptide, removed by sortase.

This sequence belongs to the glycosyl hydrolase 13 family.

Its subcellular location is the secreted. The protein localises to the cell wall. The protein resides in the cell surface. It carries out the reaction Hydrolysis of (1-&gt;6)-alpha-D-glucosidic linkages in pullulan, amylopectin and glycogen, and in the alpha- and beta-limit dextrins of amylopectin and glycogen.. Its activity is regulated as follows. Inhibited by 4-O-alpha-D-glucopyranosylmoranoline (G1M). Its function is as follows. Virulence factor. Involved in the degradation of glycogen of the mammalian host cells. Hydrolyzes the alpha-1,6-branchpoints of glycogen. Hydrolyzes pullulan. Does not hydrolyze dextran. Binds to mouse lung alveolar type II cells that are rich in glycogen stores. Is an alpha-glucan-specific carbohydrate-binding protein, which binds to amylose (pure alpha-(1,4)-linked glucose), amylopectin (alpha-(1,4)-linked glucose with alpha-(1,6) branch points), pullulan (linear polymer of mixed alpha-(1,4)- and alpha-(1,6)-linked glucose) and glycogen (similar to amylopectin with more frequent alpha-(1,6) branch points) in vitro. Does not bind to dextran (a linear polymer of alpha-(1,6)-linked glucose). In Streptococcus pneumoniae serotype 4 (strain ATCC BAA-334 / TIGR4), this protein is Pullulanase A.